A 316-amino-acid chain; its full sequence is MSSHTNLPSPKPVPKPDHRISGTSQTKKPPSSSVAQDQQNLKCPRCNSPNTKFCYYNNYSLSQPRHFCKSCRRYWTRGGALRNVPIGGGCRKTKKSIKPNSSMNTLPSSSSSQRFFSSIMEDSSKFFPPPTTMDFQLAGLSLNKMNDLQLLNNQEVLDLRPMMSSGRENTPVDVGSGLSLMGFGDFNNNHSPTGFTTAGASDGNLASSIETLSCLNQDLHWRLQQQRMAMLFGNSKEETVVVERPQPILYRNLEIVNSSSPSSPTKKGDNQTEWYFGNNSDNEGVISNNANTGGGGSEWNNGIQAWTDLNHYNALP.

Positions 1 to 42 are disordered; that stretch reads MSSHTNLPSPKPVPKPDHRISGTSQTKKPPSSSVAQDQQNLK. Polar residues predominate over residues 21–42; the sequence is SGTSQTKKPPSSSVAQDQQNLK. Residues 41-95 form a Dof-type zinc finger; it reads LKCPRCNSPNTKFCYYNNYSLSQPRHFCKSCRRYWTRGGALRNVPIGGGCRKTKK. Positions 43, 46, 68, and 71 each coordinate Zn(2+). Disordered stretches follow at residues 92-111 and 257-294; these read KTKK…SSSS and NSSS…NTGG. The segment covering 101–111 has biased composition (low complexity); sequence SSMNTLPSSSS. The span at 257–291 shows a compositional bias: polar residues; that stretch reads NSSSPSSPTKKGDNQTEWYFGNNSDNEGVISNNAN.

It localises to the nucleus. Transcription factor that binds specifically to a 5'-AA[AG]G-3' consensus core sequence. The sequence is that of Dof zinc finger protein DOF5.7 (DOF5.7) from Arabidopsis thaliana (Mouse-ear cress).